The primary structure comprises 317 residues: ADP-L-glycero-D-manno-heptose-6-epimerase (317 aa).

NADP(+) contacts are provided by residues 10-11 (FI), 31-32 (DD), glutamine 38, lysine 53, 75-79 (QGACS), and asparagine 92. Residue tyrosine 139 is the Proton acceptor of the active site. NADP(+) is bound at residue lysine 143. Asparagine 166 lines the substrate pocket. Residues valine 167 and lysine 175 each coordinate NADP(+). The active-site Proton acceptor is lysine 175. Substrate contacts are provided by residues glycine 177, histidine 184, 198–201 (FEGV), arginine 211, and tyrosine 275.

It belongs to the NAD(P)-dependent epimerase/dehydratase family. HldD subfamily. In terms of assembly, homopentamer. NADP(+) is required as a cofactor.

The enzyme catalyses ADP-D-glycero-beta-D-manno-heptose = ADP-L-glycero-beta-D-manno-heptose. The protein operates within nucleotide-sugar biosynthesis; ADP-L-glycero-beta-D-manno-heptose biosynthesis; ADP-L-glycero-beta-D-manno-heptose from D-glycero-beta-D-manno-heptose 7-phosphate: step 4/4. Functionally, catalyzes the interconversion between ADP-D-glycero-beta-D-manno-heptose and ADP-L-glycero-beta-D-manno-heptose via an epimerization at carbon 6 of the heptose. The chain is ADP-L-glycero-D-manno-heptose-6-epimerase from Shewanella frigidimarina (strain NCIMB 400).